The sequence spans 501 residues: NAD(P)H-quinone oxidoreductase chain 4, chloroplastic (501 aa).

14 consecutive transmembrane segments (helical) span residues phenylalanine 4–phenylalanine 24, tyrosine 35–phenylalanine 55, isoleucine 87–valine 107, leucine 113–aspartate 133, isoleucine 134–isoleucine 154, phenylalanine 167–phenylalanine 187, isoleucine 211–histidine 231, histidine 242–isoleucine 262, serine 274–isoleucine 294, isoleucine 310–glycine 330, alanine 331–isoleucine 351, leucine 386–valine 406, isoleucine 416–methionine 436, and isoleucine 464–valine 484.

This sequence belongs to the complex I subunit 4 family.

The protein resides in the plastid. It localises to the chloroplast thylakoid membrane. The enzyme catalyses a plastoquinone + NADH + (n+1) H(+)(in) = a plastoquinol + NAD(+) + n H(+)(out). It catalyses the reaction a plastoquinone + NADPH + (n+1) H(+)(in) = a plastoquinol + NADP(+) + n H(+)(out). The polypeptide is NAD(P)H-quinone oxidoreductase chain 4, chloroplastic (Physcomitrium patens (Spreading-leaved earth moss)).